The following is a 103-amino-acid chain: Large ribosomal subunit protein bL21 (103 aa).

This sequence belongs to the bacterial ribosomal protein bL21 family. As to quaternary structure, part of the 50S ribosomal subunit. Contacts protein L20.

In terms of biological role, this protein binds to 23S rRNA in the presence of protein L20. This is Large ribosomal subunit protein bL21 from Shewanella denitrificans (strain OS217 / ATCC BAA-1090 / DSM 15013).